The chain runs to 346 residues: Insertion element IS476 uncharacterized 39.2 kDa protein (346 aa).

Residues 1–50 (MVSARPAFISGGPSTGGWRPTRQAAERTGGPEHSIEEVAGRGAPGHRSAE) form a disordered region. Basic and acidic residues predominate over residues 29 to 39 (GGPEHSIEEVA). The Integrase catalytic domain maps to 169-329 (ASSMPNDTWS…IPPAQFAANY (161 aa)).

This chain is Insertion element IS476 uncharacterized 39.2 kDa protein, found in Xanthomonas euvesicatoria.